A 394-amino-acid polypeptide reads, in one-letter code: Formate-dependent phosphoribosylglycinamide formyltransferase (394 aa).

N(1)-(5-phospho-beta-D-ribosyl)glycinamide is bound by residues 22-23 (EL) and Glu82. Residues Arg114, Lys155, 160–165 (SSGKGQ), 195–198 (EGFV), and Glu203 contribute to the ATP site. The ATP-grasp domain occupies 119–308 (RLAAETLKLP…EFALHVRAIL (190 aa)). Positions 267 and 279 each coordinate Mg(2+). N(1)-(5-phospho-beta-D-ribosyl)glycinamide-binding positions include Asp286, Lys357, and 364–365 (RR).

It belongs to the PurK/PurT family. In terms of assembly, homodimer.

It carries out the reaction N(1)-(5-phospho-beta-D-ribosyl)glycinamide + formate + ATP = N(2)-formyl-N(1)-(5-phospho-beta-D-ribosyl)glycinamide + ADP + phosphate + H(+). It participates in purine metabolism; IMP biosynthesis via de novo pathway; N(2)-formyl-N(1)-(5-phospho-D-ribosyl)glycinamide from N(1)-(5-phospho-D-ribosyl)glycinamide (formate route): step 1/1. Functionally, involved in the de novo purine biosynthesis. Catalyzes the transfer of formate to 5-phospho-ribosyl-glycinamide (GAR), producing 5-phospho-ribosyl-N-formylglycinamide (FGAR). Formate is provided by PurU via hydrolysis of 10-formyl-tetrahydrofolate. This chain is Formate-dependent phosphoribosylglycinamide formyltransferase, found in Tolumonas auensis (strain DSM 9187 / NBRC 110442 / TA 4).